Consider the following 326-residue polypeptide: Peroxidase 41 (326 aa).

A signal peptide spans 1-20; sequence MSSVINVLFVVLVFVPSIYS. A glycan (N-linked (GlcNAc...) asparagine) is linked at N25. 4 cysteine pairs are disulfide-bonded: C35/C116, C68/C73, C122/C318, and C201/C228. H66 acts as the Proton acceptor in catalysis. Residues D67, G72, D74, and S76 each contribute to the Ca(2+) site. P164 provides a ligand contact to substrate. A glycan (N-linked (GlcNAc...) asparagine) is linked at N167. H194 is a binding site for heme b. T195 is a binding site for Ca(2+). N234 is a glycosylation site (N-linked (GlcNAc...) asparagine). Residues D242, T245, and D250 each coordinate Ca(2+). N286 carries an N-linked (GlcNAc...) asparagine glycan.

The protein belongs to the peroxidase family. Classical plant (class III) peroxidase subfamily. Requires heme b as cofactor. Ca(2+) is required as a cofactor.

It is found in the secreted. The catalysed reaction is 2 a phenolic donor + H2O2 = 2 a phenolic radical donor + 2 H2O. In terms of biological role, removal of H(2)O(2), oxidation of toxic reductants, biosynthesis and degradation of lignin, suberization, auxin catabolism, response to environmental stresses such as wounding, pathogen attack and oxidative stress. These functions might be dependent on each isozyme/isoform in each plant tissue. This Arabidopsis thaliana (Mouse-ear cress) protein is Peroxidase 41 (PER41).